The following is a 354-amino-acid chain: Soluble interferon alpha/beta receptor OPG204 (354 aa).

The signal sequence occupies residues 1–22 (MMKMTMKMMVHIYFVSLLLLLF). Ig-like C2-type domains are found at residues 68–150 (IGEP…RSHV) and 158–240 (PEIY…IVVS). 2 disulfide bridges follow: Cys76-Cys132 and Cys175-Cys224. Asn120, Asn124, Asn185, Asn272, and Asn324 each carry an N-linked (GlcNAc...) asparagine; by host glycan. The Ig-like V-type domain maps to 249–348 (PSQDHRFKLI…HNYYFEKTLT (100 aa)). Cys275 and Cys336 are disulfide-bonded.

The protein belongs to the interleukin-1 receptor family. In terms of assembly, interacts with host IFNA1.

It localises to the secreted. Functionally, counteracts the antiviral effects of host IFN-alpha/beta and key IFN-inducible proteins involved in viral RNA degradation suxh as host OAS1. Acts as a soluble IFN-alpha receptor and thus inhibits the interaction between host IFN-alpha and its receptor. The polypeptide is Soluble interferon alpha/beta receptor OPG204 (OPG204) (Homo sapiens (Human)).